A 234-amino-acid chain; its full sequence is Uridylate kinase (234 aa).

10 to 11 (GS) lines the ATP pocket. G44 contacts UMP. ATP is bound by residues G45 and R49. UMP contacts are provided by residues D66 and 114–120 (ITPAQTT). ATP is bound by residues T140, Y146, and D149.

It belongs to the UMP kinase family. Homohexamer.

The protein localises to the cytoplasm. It carries out the reaction UMP + ATP = UDP + ADP. It functions in the pathway pyrimidine metabolism; CTP biosynthesis via de novo pathway; UDP from UMP (UMPK route): step 1/1. Inhibited by UTP. Functionally, catalyzes the reversible phosphorylation of UMP to UDP. In Methanoculleus marisnigri (strain ATCC 35101 / DSM 1498 / JR1), this protein is Uridylate kinase.